The following is a 274-amino-acid chain: Large ribosomal subunit protein uL2 (274 aa).

Disordered stretches follow at residues Ala28 to Ile54 and Val223 to Asp265. Positions Lys39 to Arg48 are enriched in low complexity.

The protein belongs to the universal ribosomal protein uL2 family. Part of the 50S ribosomal subunit. Forms a bridge to the 30S subunit in the 70S ribosome.

One of the primary rRNA binding proteins. Required for association of the 30S and 50S subunits to form the 70S ribosome, for tRNA binding and peptide bond formation. It has been suggested to have peptidyltransferase activity; this is somewhat controversial. Makes several contacts with the 16S rRNA in the 70S ribosome. The protein is Large ribosomal subunit protein uL2 of Alteromonas mediterranea (strain DSM 17117 / CIP 110805 / LMG 28347 / Deep ecotype).